The following is a 524-amino-acid chain: GMP synthase [glutamine-hydrolyzing] (524 aa).

A Glutamine amidotransferase type-1 domain is found at 8–206 (RILILDFGSQ…IYDICGCEAL (199 aa)). Cys85 acts as the Nucleophile in catalysis. Residues His180 and Glu182 contribute to the active site. The region spanning 207 to 399 (WEPRHIIAKS…LGLPFELVYR (193 aa)) is the GMPS ATP-PPase domain. 234 to 240 (SGGVDSS) is an ATP binding site.

In terms of assembly, homodimer.

The enzyme catalyses XMP + L-glutamine + ATP + H2O = GMP + L-glutamate + AMP + diphosphate + 2 H(+). Its pathway is purine metabolism; GMP biosynthesis; GMP from XMP (L-Gln route): step 1/1. Its function is as follows. Catalyzes the synthesis of GMP from XMP. The protein is GMP synthase [glutamine-hydrolyzing] of Nitrosococcus oceani (strain ATCC 19707 / BCRC 17464 / JCM 30415 / NCIMB 11848 / C-107).